Consider the following 344-residue polypeptide: Mitochondrial genome maintenance exonuclease 1 (344 aa).

Catalysis depends on residues D238, D251, and K253. S343 carries the phosphoserine modification.

This sequence belongs to the MGME1 family.

It localises to the mitochondrion. Its function is as follows. Metal-dependent single-stranded DNA (ssDNA) exonuclease involved in mitochondrial genome maintenance. Has preference for 5'-3' exonuclease activity but is also capable of endonuclease activity on linear substrates. Necessary for maintenance of proper 7S DNA levels. Probably involved in mitochondrial DNA (mtDNA) repair, possibly via the processing of displaced DNA containing Okazaki fragments during RNA-primed DNA synthesis on the lagging strand or via processing of DNA flaps during long-patch base excision repair. Specifically binds 5-hydroxymethylcytosine (5hmC)-containing DNA in stem cells. The sequence is that of Mitochondrial genome maintenance exonuclease 1 from Homo sapiens (Human).